Here is a 125-residue protein sequence, read N- to C-terminus: Small ribosomal subunit protein uS11m (125 aa).

This sequence belongs to the universal ribosomal protein uS11 family.

The protein resides in the mitochondrion. This is Small ribosomal subunit protein uS11m (RPS11) from Marchantia polymorpha (Common liverwort).